The following is a 396-amino-acid chain: Elongation factor Tu (396 aa).

Residues 10 to 206 enclose the tr-type G domain; the sequence is KPHCNIGTIG…AVDAYIPQPE (197 aa). The segment at 19-26 is G1; the sequence is GHVDHGKT. 19–26 is a binding site for GTP; sequence GHVDHGKT. Thr26 contacts Mg(2+). The interval 60–64 is G2; the sequence is GITIS. The tract at residues 81–84 is G3; the sequence is DCPG. Residues 81–85 and 136–139 contribute to the GTP site; these read DCPGH and NKCD. A G4 region spans residues 136-139; sequence NKCD. The tract at residues 174–176 is G5; it reads SAL.

The protein belongs to the TRAFAC class translation factor GTPase superfamily. Classic translation factor GTPase family. EF-Tu/EF-1A subfamily. In terms of assembly, monomer.

It is found in the cytoplasm. The catalysed reaction is GTP + H2O = GDP + phosphate + H(+). Functionally, GTP hydrolase that promotes the GTP-dependent binding of aminoacyl-tRNA to the A-site of ribosomes during protein biosynthesis. The sequence is that of Elongation factor Tu from Rhodopseudomonas palustris (strain BisB18).